The sequence spans 214 residues: Ceramide-1-phosphate transfer protein (214 aa).

The an N-acylsphingoid base 1-phosphate site is built by D56, K60, R106, R110, and H150.

This sequence belongs to the GLTP family. As to expression, ubiquitous. Detected in heart, brain, placenta, lung, liver, skeletal muscle, kidney, pancreas, spleen, thymus, prostate, testis, ovary, small intestine, colon and peripheral blood leukocytes.

The protein resides in the cytoplasm. Its subcellular location is the cytosol. It is found in the golgi apparatus. The protein localises to the trans-Golgi network membrane. It localises to the cell membrane. The protein resides in the endosome membrane. Its subcellular location is the nucleus outer membrane. It carries out the reaction N-(hexadecanoyl)-sphing-4-enine-1-phosphate(in) = N-(hexadecanoyl)-sphing-4-enine-1-phosphate(out). The catalysed reaction is N-(9Z-octadecenoyl)-sphing-4-enine-1-phosphate(in) = N-(9Z-octadecenoyl)-sphing-4-enine-1-phosphate(out). Its function is as follows. Mediates the intracellular transfer of ceramide-1-phosphate (C1P) between organelle membranes and the cell membrane. Required for normal structure of the Golgi stacks. Can bind phosphoceramides with a variety of aliphatic chains, but has a preference for lipids with saturated C16:0 or monounsaturated C18:1 aliphatic chains, and is inefficient with phosphoceramides containing lignoceryl (C24:0). Plays a role in the regulation of the cellular levels of ceramide-1-phosphate, and thereby contributes to the regulation of phospholipase PLA2G4A activity and the release of arachidonic acid. Has no activity with galactosylceramide, lactosylceramide, sphingomyelin, phosphatidylcholine, phosphatidic acid and ceramide. C1P transfer is stimulated by phosphatidylserine in C1P source vesicles. Regulates autophagy, inflammasome mediated IL1B and IL18 processing, and pyroptosis, but not apoptosis. The polypeptide is Ceramide-1-phosphate transfer protein (Homo sapiens (Human)).